A 91-amino-acid polypeptide reads, in one-letter code: UPF0298 protein M28_Spy0318 (91 aa).

This sequence belongs to the UPF0298 family.

Its subcellular location is the cytoplasm. In Streptococcus pyogenes serotype M28 (strain MGAS6180), this protein is UPF0298 protein M28_Spy0318.